The following is a 752-amino-acid chain: Photosystem I P700 chlorophyll a apoprotein A1 (752 aa).

8 helical membrane passes run 73-96 (IFSAHFGHLAVVMVWLSGMIFHGA), 159-182 (LYVTAIGGLVLAGLFLFAGWFHYH), 198-222 (LNHHLQVLLGCGSLGWAGHLIHVSA), 294-312 (IAHHHLAIAVLFIVAGHQY), 349-372 (WHAQLATNLAFLGSLTIIIAHHMY), 388-414 (LCIFTHHIWIGGFLIVGGAAHAAIFMV), 436-458 (AIISHLNWVCIFLGFHSFGLYIH), and 533-551 (FLIHHIHAFTIHVTVLILL). [4Fe-4S] cluster-binding residues include cysteine 575 and cysteine 584. The next 2 membrane-spanning stretches (helical) occupy residues 591–612 (HVFLGLFWMYNSLSIVIFHFSW) and 666–688 (LSAYGLLFLGAHFVWAFSLMFLF). Histidine 677 contacts chlorophyll a'. 2 residues coordinate chlorophyll a: methionine 685 and tyrosine 693. Tryptophan 694 is a phylloquinone binding site. The chain crosses the membrane as a helical span at residues 726–746 (AVGVAHYLLGGIATTWAFFHA).

Belongs to the PsaA/PsaB family. In terms of assembly, the PsaA/B heterodimer binds the P700 chlorophyll special pair and subsequent electron acceptors. PSI consists of a core antenna complex that captures photons, and an electron transfer chain that converts photonic excitation into a charge separation. The cyanobacterial PSI reaction center is composed of one copy each of PsaA,B,C,D,E,F,I,J,K,L,M and X, and forms trimeric complexes. PSI electron transfer chain: 5 chlorophyll a, 1 chlorophyll a', 2 phylloquinones and 3 4Fe-4S clusters. PSI core antenna: 90 chlorophyll a, 22 carotenoids, 3 phospholipids and 1 galactolipid. P700 is a chlorophyll a/chlorophyll a' dimer, A0 is one or more chlorophyll a, A1 is one or both phylloquinones and FX is a shared 4Fe-4S iron-sulfur center. serves as cofactor.

The protein resides in the cellular thylakoid membrane. It carries out the reaction reduced [plastocyanin] + hnu + oxidized [2Fe-2S]-[ferredoxin] = oxidized [plastocyanin] + reduced [2Fe-2S]-[ferredoxin]. PsaA and PsaB bind P700, the primary electron donor of photosystem I (PSI), as well as the electron acceptors A0, A1 and FX. PSI is a plastocyanin/cytochrome c6-ferredoxin oxidoreductase, converting photonic excitation into a charge separation, which transfers an electron from the donor P700 chlorophyll pair to the spectroscopically characterized acceptors A0, A1, FX, FA and FB in turn. Oxidized P700 is reduced on the lumenal side of the thylakoid membrane by plastocyanin or cytochrome c6. The polypeptide is Photosystem I P700 chlorophyll a apoprotein A1 (Nostoc punctiforme (strain ATCC 29133 / PCC 73102)).